The following is a 398-amino-acid chain: Lysophospholipid transporter LplT (398 aa).

12 helical membrane passes run 16–36, 53–73, 91–111, 139–159, 163–183, 195–213, 227–247, 253–273, 286–306, 310–330, 344–364, and 372–392; these read MIAV…LLFA, ILQM…GQVA, AGAL…LVGV, LMEA…GILA, IVAA…ANLY, SWTP…VVLW, LFWG…PVAL, ATPT…AGAA, MPAG…TTLF, ALLL…NALL, IAVQ…LYSL, and VVGV…ALWL.

This sequence belongs to the major facilitator superfamily. LplT (TC 2.A.1.42) family.

It localises to the cell inner membrane. Its function is as follows. Catalyzes the facilitated diffusion of 2-acyl-glycero-3-phosphoethanolamine (2-acyl-GPE) into the cell. This Serratia proteamaculans (strain 568) protein is Lysophospholipid transporter LplT.